A 733-amino-acid polypeptide reads, in one-letter code: DNA-binding protein SATB2 (733 aa).

The tract at residues 1-47 (MERRSESPCLRDSPDRRSGSPDVKGPPPVKVARLEQNGSPMGARGRP) is disordered. The residue at position 20 (S20) is a Phosphoserine. Glycyl lysine isopeptide (Lys-Gly) (interchain with G-Cter in SUMO2) cross-links involve residues K24 and K30. S39 is modified (phosphoserine). A CMP domain is found at 57–158 (GLMIPVFCVV…VVTLKIQLQS (102 aa)). K161 is covalently cross-linked (Glycyl lysine isopeptide (Lys-Gly) (interchain with G-Cter in SUMO2)). Residues 161–234 (KLEDLPAEQW…WYKKYKKIKV (74 aa)) enclose the CUTL domain. K233 is covalently cross-linked (Glycyl lysine isopeptide (Lys-Gly) (interchain with G-Cter in SUMO)). K350 is covalently cross-linked (Glycyl lysine isopeptide (Lys-Gly) (interchain with G-Cter in SUMO); alternate). Residue K350 forms a Glycyl lysine isopeptide (Lys-Gly) (interchain with G-Cter in SUMO2); alternate linkage. Positions 350–437 (KPEPTNSSVE…ERDRIYQDER (88 aa)) form a DNA-binding region, CUT 1. Positions 435 to 473 (DERERSMNPNVSMVSSASSSPSSSRTPQAKTSTPTTDLP) are disordered. Residues 441–458 (MNPNVSMVSSASSSPSSS) are compositionally biased toward low complexity. S454 bears the Phosphoserine mark. Residues 459-470 (RTPQAKTSTPTT) are compositionally biased toward polar residues. Residue T467 is modified to Phosphothreonine. The segment at residues 473 to 560 (PIKVDGANVN…ERDVIYEEES (88 aa)) is a DNA-binding region (CUT 2). K475 is covalently cross-linked (Glycyl lysine isopeptide (Lys-Gly) (interchain with G-Cter in SUMO2)). 2 disordered regions span residues 580–617 (QVLH…KPRS) and 691–733 (DEEL…TDQR). S594 carries the phosphoserine modification. The homeobox DNA-binding region spans 615–674 (PRSRTKISLEALGILQSFIHDVGLYPDQEAIHTLSAQLDLPKHTIIKFFQNQRYHVKHHG). Over residues 694–708 (LLTESEENDSEEGSE) the composition is skewed to acidic residues. Positions 709–733 (EMYKVEAEEENADKSKAAPAETDQR) are enriched in basic and acidic residues. K724 is covalently cross-linked (Glycyl lysine isopeptide (Lys-Gly) (interchain with G-Cter in SUMO2)).

It belongs to the CUT homeobox family. Interacts with PIAS1. Interacts with ATF4 and RUNX2; resulting in enhanced DNA binding and transactivation by these transcription factors. In terms of processing, sumoylated by PIAS1. Sumoylation promotes nuclear localization, but represses transcription factor activity. As to expression, expressed in cortical neurons that extend axons across the corpus callosum. Also expressed in branchial arches and in cells of the osteoblast lineage, but not in chondrocytes and osteoclasts.

It localises to the nucleus matrix. Functionally, binds to DNA, at nuclear matrix- or scaffold-associated regions. Thought to recognize the sugar-phosphate structure of double-stranded DNA. Transcription factor controlling nuclear gene expression, by binding to matrix attachment regions (MARs) of DNA and inducing a local chromatin-loop remodeling. Acts as a docking site for several chromatin remodeling enzymes and also by recruiting corepressors (HDACs) or coactivators (HATs) directly to promoters and enhancers. Required for the initiation of the upper-layer neurons (UL1) specific genetic program and for the inactivation of deep-layer neurons (DL) and UL2 specific genes, probably by modulating Bcl11b expression. Repressor of Ctip2 and regulatory determinant of corticocortical connections in the developing cerebral cortex. May play an important role in palate formation. Acts as a molecular node in a transcriptional network regulating skeletal development and osteoblast differentiation. In Mus musculus (Mouse), this protein is DNA-binding protein SATB2 (Satb2).